A 338-amino-acid polypeptide reads, in one-letter code: Phenylalanine--tRNA ligase alpha subunit (338 aa).

Mg(2+) is bound at residue glutamate 252.

The protein belongs to the class-II aminoacyl-tRNA synthetase family. Phe-tRNA synthetase alpha subunit type 1 subfamily. Tetramer of two alpha and two beta subunits. It depends on Mg(2+) as a cofactor.

Its subcellular location is the cytoplasm. The catalysed reaction is tRNA(Phe) + L-phenylalanine + ATP = L-phenylalanyl-tRNA(Phe) + AMP + diphosphate + H(+). The protein is Phenylalanine--tRNA ligase alpha subunit of Pseudomonas paraeruginosa (strain DSM 24068 / PA7) (Pseudomonas aeruginosa (strain PA7)).